A 77-amino-acid chain; its full sequence is Acyl carrier protein (77 aa).

A Carrier domain is found at 2-77 (ADVLERVTKI…DAVTYIESHL (76 aa)). Ser37 is subject to O-(pantetheine 4'-phosphoryl)serine.

This sequence belongs to the acyl carrier protein (ACP) family. In terms of processing, 4'-phosphopantetheine is transferred from CoA to a specific serine of apo-ACP by AcpS. This modification is essential for activity because fatty acids are bound in thioester linkage to the sulfhydryl of the prosthetic group.

The protein localises to the cytoplasm. The protein operates within lipid metabolism; fatty acid biosynthesis. In terms of biological role, carrier of the growing fatty acid chain in fatty acid biosynthesis. The polypeptide is Acyl carrier protein (Bacillus anthracis (strain A0248)).